The chain runs to 51 residues: Large ribosomal subunit protein eL39y (51 aa).

Residues 1 to 21 (MPSHKSFMIKKKLGKKMRQNR) form a disordered region. A compositionally biased stretch (basic residues) spans 7–19 (FMIKKKLGKKMRQ).

This sequence belongs to the eukaryotic ribosomal protein eL39 family.

This chain is Large ribosomal subunit protein eL39y (RPL39B), found in Arabidopsis thaliana (Mouse-ear cress).